Reading from the N-terminus, the 178-residue chain is SCAN domain-containing protein 1 (178 aa).

Residues 1 to 107 (MAATEQSLAP…GSRPGPETFR (107 aa)) are disordered. The span at 9-18 (APAGSSAPPS) shows a compositional bias: low complexity. Over residues 36–54 (GSSSTPEAPSIPDSSNPSA) the composition is skewed to polar residues. Positions 107–178 (RQRFRQFRYQ…RRRTDVRITG (72 aa)) constitute an SCAN box domain.

In terms of assembly, interacts with ZNF202.

Its subcellular location is the nucleus. Functionally, may regulate transcriptional activity. This is SCAN domain-containing protein 1 (SCAND1) from Bos taurus (Bovine).